Here is a 277-residue protein sequence, read N- to C-terminus: 3-methyl-2-oxobutanoate hydroxymethyltransferase (277 aa).

The Mg(2+) site is built by Asp53 and Asp96. 3-methyl-2-oxobutanoate contacts are provided by residues 53–54, Asp96, and Lys126; that span reads DS. Glu128 provides a ligand contact to Mg(2+). Glu195 serves as the catalytic Proton acceptor.

This sequence belongs to the PanB family. As to quaternary structure, homodecamer; pentamer of dimers. Requires Mg(2+) as cofactor.

It is found in the cytoplasm. It carries out the reaction 3-methyl-2-oxobutanoate + (6R)-5,10-methylene-5,6,7,8-tetrahydrofolate + H2O = 2-dehydropantoate + (6S)-5,6,7,8-tetrahydrofolate. Its pathway is cofactor biosynthesis; (R)-pantothenate biosynthesis; (R)-pantoate from 3-methyl-2-oxobutanoate: step 1/2. Catalyzes the reversible reaction in which hydroxymethyl group from 5,10-methylenetetrahydrofolate is transferred onto alpha-ketoisovalerate to form ketopantoate. This Chlorobium luteolum (strain DSM 273 / BCRC 81028 / 2530) (Pelodictyon luteolum) protein is 3-methyl-2-oxobutanoate hydroxymethyltransferase.